Here is a 632-residue protein sequence, read N- to C-terminus: MAU2 chromatid cohesion factor homolog (632 aa).

TPR repeat units follow at residues 453-486 and 493-526; these read GGFY…ANAE and SCSL…ASKI.

This sequence belongs to the SCC4/mau-2 family. In terms of assembly, interacts with Nipped-B to form the cohesin loading complex.

The protein resides in the nucleus. The protein localises to the nucleoplasm. Functionally, required for association of the cohesin complex with chromatin during interphase. Plays a role in sister chromatid cohesion and normal progression through prometaphase. The sequence is that of MAU2 chromatid cohesion factor homolog from Drosophila melanogaster (Fruit fly).